A 350-amino-acid chain; its full sequence is Hydroxymethylglutaryl-CoA synthase (350 aa).

The active-site Proton donor/acceptor is Glu-83. Catalysis depends on Cys-115, which acts as the Acyl-thioester intermediate. (3S)-3-hydroxy-3-methylglutaryl-CoA-binding residues include Cys-115 and Thr-156. Arg-204 provides a ligand contact to CoA. 2 residues coordinate (3S)-3-hydroxy-3-methylglutaryl-CoA: Thr-206 and His-239. His-239 serves as the catalytic Proton donor/acceptor. Lys-244 contributes to the CoA binding site. Asn-271 and Ser-301 together coordinate (3S)-3-hydroxy-3-methylglutaryl-CoA.

The protein belongs to the thiolase-like superfamily. Archaeal HMG-CoA synthase family. As to quaternary structure, interacts with acetoacetyl-CoA thiolase that catalyzes the precedent step in the pathway and with a DUF35 protein. The acetoacetyl-CoA thiolase/HMG-CoA synthase complex channels the intermediate via a fused CoA-binding site, which allows for efficient coupling of the endergonic thiolase reaction with the exergonic HMGCS reaction.

It catalyses the reaction acetoacetyl-CoA + acetyl-CoA + H2O = (3S)-3-hydroxy-3-methylglutaryl-CoA + CoA + H(+). It functions in the pathway metabolic intermediate biosynthesis; (R)-mevalonate biosynthesis; (R)-mevalonate from acetyl-CoA: step 2/3. Functionally, catalyzes the condensation of acetyl-CoA with acetoacetyl-CoA to form 3-hydroxy-3-methylglutaryl-CoA (HMG-CoA). Functions in the mevalonate (MVA) pathway leading to isopentenyl diphosphate (IPP), a key precursor for the biosynthesis of isoprenoid compounds that are building blocks of archaeal membrane lipids. The protein is Hydroxymethylglutaryl-CoA synthase of Pyrococcus horikoshii (strain ATCC 700860 / DSM 12428 / JCM 9974 / NBRC 100139 / OT-3).